Consider the following 260-residue polypeptide: Trialysin (260 aa).

The N-terminal stretch at 1–19 (MSKFWLLLLLVAAFQFAHS) is a signal peptide. A propeptide spans 20-55 (YPAAEYELDETTNDEVRQFIGDGYFEDEGDDGDEER) (removed in mature form, probably by the serine protease triapsin).

The protein belongs to the redulysin-like family. Expressed in salivary glands.

It localises to the secreted. The protein localises to the target cell membrane. Pore-forming protein that induces lysis of T.cruzi trypomastigotes, bacteria E.coli and human red blood cells. The parasite lysis is much more important than the hemolysis, probably due to difference in membrane composition. Its action on protozoan parasites and bacteria may indicate a role in the control of microorganism growth in the salivary glands. The sequence is that of Trialysin from Triatoma infestans (Assassin bug).